The chain runs to 209 residues: Thymidine kinase (209 aa).

Residues 25–32 (GCMFAGKT) and 103–106 (DEVQ) each bind ATP. The Proton acceptor role is filled by Glu104. Cys160, Cys163, Cys198, and Cys201 together coordinate Zn(2+).

The protein belongs to the thymidine kinase family. As to quaternary structure, homotetramer.

Its subcellular location is the cytoplasm. It carries out the reaction thymidine + ATP = dTMP + ADP + H(+). In Mycoplasma mycoides subsp. mycoides SC (strain CCUG 32753 / NCTC 10114 / PG1), this protein is Thymidine kinase.